The primary structure comprises 242 residues: tRNA (guanine-N(1)-)-methyltransferase (242 aa).

S-adenosyl-L-methionine contacts are provided by residues G111 and 130–135; that span reads IGDYVL.

This sequence belongs to the RNA methyltransferase TrmD family. As to quaternary structure, homodimer.

It is found in the cytoplasm. The enzyme catalyses guanosine(37) in tRNA + S-adenosyl-L-methionine = N(1)-methylguanosine(37) in tRNA + S-adenosyl-L-homocysteine + H(+). Functionally, specifically methylates guanosine-37 in various tRNAs. This Onion yellows phytoplasma (strain OY-M) protein is tRNA (guanine-N(1)-)-methyltransferase.